Here is a 415-residue protein sequence, read N- to C-terminus: Serine--tRNA ligase (415 aa).

231-233 provides a ligand contact to L-serine; that stretch reads TAE. 262-264 serves as a coordination point for ATP; sequence RSE. E285 contributes to the L-serine binding site. 349 to 352 serves as a coordination point for ATP; sequence EISS. S383 is an L-serine binding site.

It belongs to the class-II aminoacyl-tRNA synthetase family. Type-1 seryl-tRNA synthetase subfamily. Homodimer. The tRNA molecule binds across the dimer.

It localises to the cytoplasm. The enzyme catalyses tRNA(Ser) + L-serine + ATP = L-seryl-tRNA(Ser) + AMP + diphosphate + H(+). The catalysed reaction is tRNA(Sec) + L-serine + ATP = L-seryl-tRNA(Sec) + AMP + diphosphate + H(+). It functions in the pathway aminoacyl-tRNA biosynthesis; selenocysteinyl-tRNA(Sec) biosynthesis; L-seryl-tRNA(Sec) from L-serine and tRNA(Sec): step 1/1. In terms of biological role, catalyzes the attachment of serine to tRNA(Ser). Is also able to aminoacylate tRNA(Sec) with serine, to form the misacylated tRNA L-seryl-tRNA(Sec), which will be further converted into selenocysteinyl-tRNA(Sec). The polypeptide is Serine--tRNA ligase (Helicobacter pylori (strain P12)).